The chain runs to 312 residues: Olfactory receptor 10D3 (312 aa).

Topologically, residues 1 to 26 are extracellular; the sequence is MEIKNCSVVTEFILLGIPHTEGFETL. Asparagine 5 carries an N-linked (GlcNAc...) asparagine glycan. Residues 27–47 traverse the membrane as a helical segment; that stretch reads LFVLFLPFYACTLVGNVSILV. The Cytoplasmic segment spans residues 48 to 57; it reads AVISSTRLHT. A helical transmembrane segment spans residues 58 to 78; sequence PMYFFLGNLSVFDMGFSSVTC. Residues 79–97 lie on the Extracellular side of the membrane; sequence PKMLFYLMGLSRLISYQDC. A disulfide bridge links cysteine 97 with cysteine 179. A helical membrane pass occupies residues 98–118; that stretch reads VSQLFFFHFLGSIECFLYTVM. The Cytoplasmic segment spans residues 119 to 139; the sequence is AYDRFAAICHPLRYSVIMNSK. The helical transmembrane segment at 140-160 threads the bilayer; sequence ICVALAVGTWLLGCFHSSVLT. Over 161-197 the chain is Extracellular; sequence SLTFTLPYCGPNEVDHFFCDIPAILPLASADTSLAQR. Residues 198–218 traverse the membrane as a helical segment; that stretch reads VSFTNVGLVSLVCFLLILLSY. Topologically, residues 219-239 are cytoplasmic; the sequence is TRITISILSIQSTEGRQRAFS. Residues 240–260 form a helical membrane-spanning segment; it reads TCSAHLIAILCAYGPIITIYL. Topologically, residues 261 to 266 are extracellular; sequence QPTPNP. The helical transmembrane segment at 267–287 threads the bilayer; the sequence is MLGTVVQILMNLVGPMLNPLI. At 288–312 the chain is on the cytoplasmic side; it reads YTLRNKEVKIALKKILHGKGSVSEG.

This sequence belongs to the G-protein coupled receptor 1 family.

Its subcellular location is the cell membrane. Potential odorant receptor. The chain is Olfactory receptor 10D3 from Mus musculus (Mouse).